The following is a 1060-amino-acid chain: DNA-directed RNA polymerase subunit beta (1060 aa).

It belongs to the RNA polymerase beta chain family. As to quaternary structure, in plastids the minimal PEP RNA polymerase catalytic core is composed of four subunits: alpha, beta, beta', and beta''. When a (nuclear-encoded) sigma factor is associated with the core the holoenzyme is formed, which can initiate transcription.

Its subcellular location is the plastid. The protein localises to the chloroplast. It catalyses the reaction RNA(n) + a ribonucleoside 5'-triphosphate = RNA(n+1) + diphosphate. DNA-dependent RNA polymerase catalyzes the transcription of DNA into RNA using the four ribonucleoside triphosphates as substrates. In Calycanthus floridus var. glaucus (Eastern sweetshrub), this protein is DNA-directed RNA polymerase subunit beta.